A 126-amino-acid chain; its full sequence is MSMQIEIKDGRSDNSPLPERKLVTLIQESYDSLKDDNEINLSTESTSNLLIKLVLEKLEKHSSLYKYIASVTTLNIEGLNEENANFSLKNDIGASWESKKDGIFNYKLEDKNNNECYLITILWLHK.

The residue at position 2 (Ser2) is an N-acetylserine.

This sequence belongs to the TDA2 family.

The protein resides in the cytoplasm. It is found in the cell projection. In Saccharomyces cerevisiae (strain JAY291) (Baker's yeast), this protein is Topoisomerase I damage affected protein 2 (TDA2).